Reading from the N-terminus, the 162-residue chain is Inorganic pyrophosphatase (162 aa).

Residue Glu8 participates in Mg(2+) binding. Positions 16, 30, and 42 each coordinate substrate. 4 residues coordinate Mg(2+): Asp52, Asp57, Asp84, and Asp89. The active-site Proton acceptor is Asp89. A substrate-binding site is contributed by Tyr126.

This sequence belongs to the PPase family. As to quaternary structure, homohexamer. It depends on Mg(2+) as a cofactor.

It is found in the cytoplasm. The catalysed reaction is diphosphate + H2O = 2 phosphate + H(+). Catalyzes the hydrolysis of inorganic pyrophosphate (PPi) forming two phosphate ions. This is Inorganic pyrophosphatase from Mycobacterium bovis (strain ATCC BAA-935 / AF2122/97).